Here is a 141-residue protein sequence, read N- to C-terminus: Flagellar assembly factor FliW (141 aa).

The protein belongs to the FliW family. Interacts with translational regulator CsrA and flagellin(s).

The protein resides in the cytoplasm. Acts as an anti-CsrA protein, binds CsrA and prevents it from repressing translation of its target genes, one of which is flagellin. Binds to flagellin and participates in the assembly of the flagellum. The sequence is that of Flagellar assembly factor FliW from Clostridium acetobutylicum (strain ATCC 824 / DSM 792 / JCM 1419 / IAM 19013 / LMG 5710 / NBRC 13948 / NRRL B-527 / VKM B-1787 / 2291 / W).